The sequence spans 1257 residues: Putative structural protein ORF146 (1257 aa).

The protein belongs to the ascovirus HvAV ORF146 family.

The protein resides in the virion. This chain is Putative structural protein ORF146, found in Noctuidae (owlet moths).